A 392-amino-acid polypeptide reads, in one-letter code: Nucleolysin TIAR (392 aa).

RRM domains lie at 9 to 102 (RTLY…WATT) and 114 to 192 (FHVF…WATR). Lys-139 is subject to N6-acetyllysine. Ser-218 is subject to Phosphoserine. The region spanning 222–294 (CTVYCGGIAS…HVVKCYWGKE (73 aa)) is the RRM 3 domain. Positions 363–392 (GAQPPQGQAPPPVIPPPNQAGYGMASFPTQ) are disordered. A compositionally biased stretch (pro residues) spans 369-380 (GQAPPPVIPPPN).

In terms of assembly, interacts with FASTK. Post-translationally, phosphorylated by MAPK14 following DNA damage, releasing TIAR from GADD45A mRNA. As to expression, expressed both in primordial germ cells (PGCs) and in neighboring somatic cells.

The protein resides in the nucleus. Its subcellular location is the cytoplasm. It localises to the stress granule. The protein localises to the cytolytic granule. Functionally, RNA-binding protein involved in alternative pre-RNA splicing and in cytoplasmic stress granules formation. Shows a preference for uridine-rich RNAs. Activates splicing of alternative exons with weak 5' splice sites followed by a U-rich stretch on its own pre-mRNA and on TIA1 mRNA. Promotes the inclusion of TIA1 exon 5 to give rise to the long isoform (isoform a) of TIA1. Acts downstream of the stress-induced phosphorylation of EIF2S1/EIF2A to promote the recruitment of untranslated mRNAs to cytoplasmic stress granules (SG). Possesses nucleolytic activity against cytotoxic lymphocyte target cells. May be involved in apoptosis. This Mus musculus (Mouse) protein is Nucleolysin TIAR (Tial1).